The following is a 199-amino-acid chain: Putative acetyltransferase SACOL2570 (199 aa).

Belongs to the transferase hexapeptide repeat family.

The protein is Putative acetyltransferase SACOL2570 of Staphylococcus aureus (strain COL).